A 218-amino-acid chain; its full sequence is Small ribosomal subunit protein uS3 (218 aa).

One can recognise a KH type-2 domain in the interval 38-106; sequence IREYLTKRLS…RVHINIVEIK (69 aa).

It belongs to the universal ribosomal protein uS3 family. As to quaternary structure, part of the 30S ribosomal subunit. Forms a tight complex with proteins S10 and S14.

Functionally, binds the lower part of the 30S subunit head. Binds mRNA in the 70S ribosome, positioning it for translation. The polypeptide is Small ribosomal subunit protein uS3 (Anoxybacillus flavithermus (strain DSM 21510 / WK1)).